The primary structure comprises 270 residues: Hydroxyethylthiazole kinase (270 aa).

A substrate-binding site is contributed by methionine 47. ATP contacts are provided by arginine 123 and threonine 169. Position 196 (glycine 196) interacts with substrate.

This sequence belongs to the Thz kinase family. It depends on Mg(2+) as a cofactor.

It catalyses the reaction 5-(2-hydroxyethyl)-4-methylthiazole + ATP = 4-methyl-5-(2-phosphooxyethyl)-thiazole + ADP + H(+). Its pathway is cofactor biosynthesis; thiamine diphosphate biosynthesis; 4-methyl-5-(2-phosphoethyl)-thiazole from 5-(2-hydroxyethyl)-4-methylthiazole: step 1/1. Its function is as follows. Catalyzes the phosphorylation of the hydroxyl group of 4-methyl-5-beta-hydroxyethylthiazole (THZ). The polypeptide is Hydroxyethylthiazole kinase (Roseiflexus castenholzii (strain DSM 13941 / HLO8)).